A 101-amino-acid polypeptide reads, in one-letter code: Non-histone chromosomal protein HMG-14 (101 aa).

Residues 1–101 form a disordered region; it reads MPKRKVSSAE…EAEEKEAKSD (101 aa). Serine 7 carries the post-translational modification ADP-ribosylserine. Serine 8 is modified (phosphoserine). Residue lysine 14 is modified to N6-acetyllysine. Serine 21 carries the post-translational modification Phosphoserine. Position 25 is an ADP-ribosylserine; alternate (serine 25). At serine 25 the chain carries Phosphoserine; alternate. Lysine 27 is subject to N6-acetyllysine. 2 stretches are compositionally biased toward basic and acidic residues: residues 33-51 and 70-86; these read VETK…DKKV and ETKE…KNEE. Phosphothreonine is present on threonine 82. Lysine 83 is modified (N6-acetyllysine). 3 positions are modified to phosphoserine: serine 87, serine 90, and serine 100.

It belongs to the HMGN family. As to quaternary structure, interacts with transcriptional regulator SEHBP. Post-translationally, phosphorylation on Ser-21 and Ser-25 weakens binding to nucleosomes and increases the rate of H3 phosphorylation.

Its subcellular location is the nucleus. Binds to the inner side of the nucleosomal DNA thus altering the interaction between the DNA and the histone octamer. May be involved in the process which maintains transcribable genes in a unique chromatin conformation. Inhibits the phosphorylation of nucleosomal histones H3 and H2A by RPS6KA5/MSK1 and RPS6KA3/RSK2. In Bos taurus (Bovine), this protein is Non-histone chromosomal protein HMG-14 (HMGN1).